The sequence spans 209 residues: Small ribosomal subunit protein uS3 (209 aa).

The KH type-2 domain maps to 38–107 (IRKVVKNAYS…RVIVNVEEIK (70 aa)).

The protein belongs to the universal ribosomal protein uS3 family. As to quaternary structure, part of the 30S ribosomal subunit. Forms a tight complex with proteins S10 and S14.

Binds the lower part of the 30S subunit head. Binds mRNA in the 70S ribosome, positioning it for translation. This Pseudothermotoga lettingae (strain ATCC BAA-301 / DSM 14385 / NBRC 107922 / TMO) (Thermotoga lettingae) protein is Small ribosomal subunit protein uS3.